The chain runs to 150 residues: D-aminoacyl-tRNA deacylase (150 aa).

Residues 138-139 (GP) carry the Gly-cisPro motif, important for rejection of L-amino acids motif.

Belongs to the DTD family. Homodimer.

It is found in the cytoplasm. The enzyme catalyses glycyl-tRNA(Ala) + H2O = tRNA(Ala) + glycine + H(+). It catalyses the reaction a D-aminoacyl-tRNA + H2O = a tRNA + a D-alpha-amino acid + H(+). An aminoacyl-tRNA editing enzyme that deacylates mischarged D-aminoacyl-tRNAs. Also deacylates mischarged glycyl-tRNA(Ala), protecting cells against glycine mischarging by AlaRS. Acts via tRNA-based rather than protein-based catalysis; rejects L-amino acids rather than detecting D-amino acids in the active site. By recycling D-aminoacyl-tRNA to D-amino acids and free tRNA molecules, this enzyme counteracts the toxicity associated with the formation of D-aminoacyl-tRNA entities in vivo and helps enforce protein L-homochirality. The chain is D-aminoacyl-tRNA deacylase from Bacteroides fragilis (strain YCH46).